The sequence spans 391 residues: Lipoyl synthase, mitochondrial (391 aa).

Residues 1–44 (MVHPHLSRTKRTFFSHSSQMISRHIRKTNSLAFVRALSASETAV) constitute a mitochondrion transit peptide. Cysteine 120, cysteine 125, cysteine 131, cysteine 150, cysteine 154, cysteine 157, and serine 365 together coordinate [4Fe-4S] cluster. The region spanning 135–354 (KKSEATATIM…KEVALEMGFL (220 aa)) is the Radical SAM core domain.

The protein belongs to the radical SAM superfamily. Lipoyl synthase family. It depends on [4Fe-4S] cluster as a cofactor.

It localises to the mitochondrion. It catalyses the reaction [[Fe-S] cluster scaffold protein carrying a second [4Fe-4S](2+) cluster] + N(6)-octanoyl-L-lysyl-[protein] + 2 oxidized [2Fe-2S]-[ferredoxin] + 2 S-adenosyl-L-methionine + 4 H(+) = [[Fe-S] cluster scaffold protein] + N(6)-[(R)-dihydrolipoyl]-L-lysyl-[protein] + 4 Fe(3+) + 2 hydrogen sulfide + 2 5'-deoxyadenosine + 2 L-methionine + 2 reduced [2Fe-2S]-[ferredoxin]. The protein operates within protein modification; protein lipoylation via endogenous pathway; protein N(6)-(lipoyl)lysine from octanoyl-[acyl-carrier-protein]: step 2/2. Functionally, catalyzes the radical-mediated insertion of two sulfur atoms into the C-6 and C-8 positions of the octanoyl moiety bound to the lipoyl domains of lipoate-dependent enzymes, thereby converting the octanoylated domains into lipoylated derivatives. The polypeptide is Lipoyl synthase, mitochondrial (Clavispora lusitaniae (strain ATCC 42720) (Yeast)).